The chain runs to 148 residues: Large-conductance mechanosensitive channel (148 aa).

2 consecutive transmembrane segments (helical) span residues Leu15–Val35 and Val84–Leu104.

It belongs to the MscL family. As to quaternary structure, homopentamer.

The protein resides in the cell inner membrane. Its function is as follows. Channel that opens in response to stretch forces in the membrane lipid bilayer. May participate in the regulation of osmotic pressure changes within the cell. In Nitratidesulfovibrio vulgaris (strain DSM 19637 / Miyazaki F) (Desulfovibrio vulgaris), this protein is Large-conductance mechanosensitive channel.